Here is a 376-residue protein sequence, read N- to C-terminus: cAMP-dependent protein kinase type I regulatory subunit (376 aa).

The dimerization and phosphorylation stretch occupies residues 1–131 (MSYMMAKTLE…ALSKAIAKNV (131 aa)). Positions 72-93 (PDDCEDLSPMPQTAAPPVRRRG) are disordered. The Pseudophosphorylation motif signature appears at 91–95 (RRGGI). At serine 96 the chain carries Phosphoserine. 3',5'-cyclic AMP is bound by residues 132–247 (LFAH…FLSR), glutamate 197, arginine 206, 250–371 (ILES…YNSF), glutamate 321, and arginine 330.

This sequence belongs to the cAMP-dependent kinase regulatory chain family. In terms of assembly, tetramer, composed of 2 regulatory (R) and 2 catalytic (C) subunits. In the presence of cAMP it dissociates into 2 active monomeric C subunits and an R dimer. Post-translationally, the pseudophosphorylation site binds to the substrate-binding region of the catalytic chain but is not phosphorylated. The physiological significance of phosphorylations by other kinases is unclear.

The chain is cAMP-dependent protein kinase type I regulatory subunit (Pka-R1) from Drosophila melanogaster (Fruit fly).